An 89-amino-acid polypeptide reads, in one-letter code: Small ribosomal subunit protein uS15 (89 aa).

It belongs to the universal ribosomal protein uS15 family. In terms of assembly, part of the 30S ribosomal subunit. Forms a bridge to the 50S subunit in the 70S ribosome, contacting the 23S rRNA.

Its function is as follows. One of the primary rRNA binding proteins, it binds directly to 16S rRNA where it helps nucleate assembly of the platform of the 30S subunit by binding and bridging several RNA helices of the 16S rRNA. Functionally, forms an intersubunit bridge (bridge B4) with the 23S rRNA of the 50S subunit in the ribosome. The sequence is that of Small ribosomal subunit protein uS15 from Synechocystis sp. (strain ATCC 27184 / PCC 6803 / Kazusa).